A 435-amino-acid polypeptide reads, in one-letter code: E3 ubiquitin-protein ligase RING1 (435 aa).

An RING-type zinc finger spans residues 46–86; sequence CPICLDMLKKTMTTKECLHRFCSDCIVTALRSGNKECPTCR. Residues 144 to 322 form a disordered region; sequence KLQSQNRPQR…TEGEGNGELG (179 aa). The span at 157 to 170 shows a compositional bias: gly residues; that stretch reads KGGGGGGGGGGNGN. Composition is skewed to low complexity over residues 171–188, 202–211, 222–251, and 259–278; these read GAANVAAPPAPGAPTAVG, SNDSNSNTNS, SGTSAASAITSASNAAPSSSANSGASTSAT, and SNPPSVRSTPSPVPSNSSSS. A Phosphoserine modification is found at Ser202. Ser266 bears the Phosphoserine mark. Thr267 carries the phosphothreonine modification. Residue Ser269 is modified to Phosphoserine. Residues 309–322 are compositionally biased toward acidic residues; that stretch reads SNIDTEGEGNGELG.

In terms of assembly, interacts with ORD. Component of PRC1 complex, which contains many PcG proteins like Pc, ph, Scm, Psc, Sce and also chromatin remodeling proteins such as histone deacetylases. This complex is distinct from the Esc/E(z) complex, at least composed of esc, E(z), Su(z)12, HDAC1/Rpd3 and Caf1-55. The two complexes however cooperate and interact together during the first 3 hours of development to establish PcG silencing. Ubiquitously expressed in syncytial blastoderm embryos. Ubiquitously expressed until stage 11. Then, it is only expressed in the neuroectoderm. Later in embryonic development, it is only expressed in the CNS. In larvae, it is expressed in all imaginal disks. Expressed in the male and female gonads.

The protein localises to the nucleus. The protein resides in the chromosome. It carries out the reaction S-ubiquitinyl-[E2 ubiquitin-conjugating enzyme]-L-cysteine + [acceptor protein]-L-lysine = [E2 ubiquitin-conjugating enzyme]-L-cysteine + N(6)-ubiquitinyl-[acceptor protein]-L-lysine.. It participates in protein modification; protein ubiquitination. In terms of biological role, E3 ubiquitin-protein ligase that mediates monoubiquitination of 'Lys-118' of histone H2A, thereby playing a central role in histone code and gene regulation. H2A 'Lys-118' ubiquitination gives a specific tag for epigenetic transcriptional repression. Polycomb group (PcG) protein. PcG proteins act by forming multiprotein complexes, which are required to maintain the transcriptionally repressive state of homeotic genes throughout development. PcG proteins are not required to initiate repression, but to maintain it during later stages of development. PcG complexes act via modification of histones, such as methylation, deacetylation, ubiquitination rendering chromatin heritably changed in its expressibility. May play a role in meiotic sister chromatid cohesion. The polypeptide is E3 ubiquitin-protein ligase RING1 (Sce) (Drosophila melanogaster (Fruit fly)).